The primary structure comprises 258 residues: L-aminoadipate-semialdehyde dehydrogenase-phosphopantetheinyl transferase (258 aa).

It belongs to the P-Pant transferase superfamily. AcpS family.

It catalyses the reaction apo-[ACP] + CoA = holo-[ACP] + adenosine 3',5'-bisphosphate + H(+). Functionally, catalyzes the transfer of a 4'-phosphopantetheine moiety from coenzyme A to a serine residue of acceptor proteins, such as alpha-aminoadipate reductase. Necessary for alpha-aminoadipate reductase activity. This Candida glabrata (strain ATCC 2001 / BCRC 20586 / JCM 3761 / NBRC 0622 / NRRL Y-65 / CBS 138) (Yeast) protein is L-aminoadipate-semialdehyde dehydrogenase-phosphopantetheinyl transferase (LYS5).